The following is a 259-amino-acid chain: Small ribosomal subunit protein eS1 (259 aa).

The residue at position 2 (A2) is an N-acetylalanine; partial.

The protein belongs to the eukaryotic ribosomal protein eS1 family. In terms of assembly, component of the small ribosomal subunit. Mature ribosomes consist of a small (40S) and a large (60S) subunit. The 40S subunit contains about 33 different proteins and 1 molecule of RNA (18S). The 60S subunit contains about 49 different proteins and 3 molecules of RNA (25S, 5.8S and 5S).

The protein resides in the cytoplasm. This is Small ribosomal subunit protein eS1 from Cryptococcus neoformans var. neoformans serotype D (strain B-3501A) (Filobasidiella neoformans).